The following is a 207-amino-acid chain: ATP synthase subunit a (207 aa).

The next 6 membrane-spanning stretches (helical) occupy residues 3–23 (QHVIMALTVLIVVPVIFTIFA), 62–82 (LIASIGLFVFFGNLLGIIPGL), 88–108 (NLNTTMALALLVFFIYNFEGI), 119–139 (FLGPVPAMAPVFVIIELLSHL), 158–178 (LISVVLIMLVPFLIPMPVMLI), and 180–200 (LIAVFLQTYVFVVLTTVYIAG).

Belongs to the ATPase A chain family. F-type ATPases have 2 components, CF(1) - the catalytic core - and CF(0) - the membrane proton channel. CF(1) has five subunits: alpha(3), beta(3), gamma(1), delta(1), epsilon(1). CF(0) has three main subunits: a(1), b(2) and c(9-12). The alpha and beta chains form an alternating ring which encloses part of the gamma chain. CF(1) is attached to CF(0) by a central stalk formed by the gamma and epsilon chains, while a peripheral stalk is formed by the delta and b chains.

It is found in the cell inner membrane. Functionally, key component of the proton channel; it plays a direct role in the translocation of protons across the membrane. In Sulfurihydrogenibium sp. (strain YO3AOP1), this protein is ATP synthase subunit a.